Here is a 357-residue protein sequence, read N- to C-terminus: Malonyl CoA reductase (NADP) (357 aa).

13–16 (TGLV) is an NADP(+) binding site. Catalysis depends on Cys-150, which acts as the Acyl-thioester intermediate. Residue 180 to 181 (SG) coordinates NADP(+). The Proton acceptor role is filled by His-245. 332–333 (NT) is a binding site for NADP(+).

Belongs to the aspartate-semialdehyde dehydrogenase family. Homotetramer.

The enzyme catalyses 3-oxopropanoate + NADP(+) + CoA = malonyl-CoA + NADPH + H(+). Catalyzes the reduction of malonyl-CoA to malonate semialdehyde, a key step in the 3-hydroxypropanoate and the 3-hydroxypropanoate/4-hydroxybutyrate cycles. This chain is Malonyl CoA reductase (NADP), found in Metallosphaera sedula (strain ATCC 51363 / DSM 5348 / JCM 9185 / NBRC 15509 / TH2).